Consider the following 269-residue polypeptide: 3-deoxy-manno-octulosonate cytidylyltransferase (269 aa).

The protein belongs to the KdsB family.

It is found in the cytoplasm. The enzyme catalyses 3-deoxy-alpha-D-manno-oct-2-ulosonate + CTP = CMP-3-deoxy-beta-D-manno-octulosonate + diphosphate. Its pathway is nucleotide-sugar biosynthesis; CMP-3-deoxy-D-manno-octulosonate biosynthesis; CMP-3-deoxy-D-manno-octulosonate from 3-deoxy-D-manno-octulosonate and CTP: step 1/1. The protein operates within bacterial outer membrane biogenesis; lipopolysaccharide biosynthesis. In terms of biological role, activates KDO (a required 8-carbon sugar) for incorporation into bacterial lipopolysaccharide in Gram-negative bacteria. This is 3-deoxy-manno-octulosonate cytidylyltransferase from Cupriavidus taiwanensis (strain DSM 17343 / BCRC 17206 / CCUG 44338 / CIP 107171 / LMG 19424 / R1) (Ralstonia taiwanensis (strain LMG 19424)).